Reading from the N-terminus, the 458-residue chain is O-acetyltransferase dmxR13 (458 aa).

The disordered stretch occupies residues 211–231 (ELARQISQPRPPPSSDGPPPP). A compositionally biased stretch (pro residues) spans 219–231 (PRPPPSSDGPPPP).

The protein belongs to the trichothecene 3-O-acetyltransferase family.

It functions in the pathway secondary metabolite biosynthesis. In terms of biological role, O-acetyltransferase; part of the gene cluster that mediates the biosynthesis of the dimeric xanthones cryptosporioptides. The pathway begins with the synthesis of atrochrysone thioester by the polyketide synthase dmx-nrPKS. The atrochrysone carboxyl ACP thioesterase dmxR1 then breaks the thioester bond and releases the atrochrysone carboxylic acid from dmx-nrPKS. Atrochrysone carboxylic acid is decarboxylated by the decarboxylase dmxR15, and oxidized by the anthrone oxygenase dmxR16 to yield emodin. Emodin is then reduced to emodin hydroquinone by the oxidoreductase dmxR7. A-ring reduction by the short chain dehydrogenase dmxR18, dehydration by the scytalone dehydratase-like protein dmxR17 and probable spontaneous re-oxidation, results in overall deoxygenation to chrysophanol. Baeyer-Villiger oxidation by the Baeyer-Villiger monooxygenase (BVMO) dmxR6 then yields monodictylactone in equilibrium with monodictyphenone. In the case of the cryptosporioptides biosynthesis, monodictylactone is reduced at C-12 to an alcohol (by the short chain dehydrogenases dmxR12 or dmxR8) and hydroxylated at C-5 by dmxR9, yielding the electron-rich aromatic which could eliminate H(2)O to form the ortho-quinonemethide, followed by tautomerisation to paraquinone and complete the formal reduction to produce the 10-methylgroup. Conjugate addition of C-4a-OH to the resulting paraquinone by the monooxygenase dmxR10 then gives cyclohexadienone, which is then reduced at C-5 by the short chain dehydrogenase dmxR3 to give the dihydroxanthone. The 6,7-epoxide in the cryptosporioptides could be introduced by the cytochrome P450 monooxygenase dmxL3. The highly reducing PKS dmxL2 manufactures butyrate, which is further carboxylated by dmxL1 to form ethylmalonate. It is not yet clear whether the carboxylation occurs while the butyrate is attached to the ACP of dmxL2, but this unusual fungal metabolite could then be esterified to O-5 by the O-acetyltransferase dmxR13. Finally, dimerization performed by dmxR5 gives the observed dimers cryptosporioptides A, B and C as the final products of the pathway. In Cryptosporiopsis sp. (strain 8999), this protein is O-acetyltransferase dmxR13.